The chain runs to 116 residues: Large ribosomal subunit protein uL18 (116 aa).

The protein belongs to the universal ribosomal protein uL18 family. In terms of assembly, part of the 50S ribosomal subunit; part of the 5S rRNA/L5/L18/L25 subcomplex. Contacts the 5S and 23S rRNAs.

This is one of the proteins that bind and probably mediate the attachment of the 5S RNA into the large ribosomal subunit, where it forms part of the central protuberance. This chain is Large ribosomal subunit protein uL18, found in Mycoplasma pneumoniae (strain ATCC 29342 / M129 / Subtype 1) (Mycoplasmoides pneumoniae).